Reading from the N-terminus, the 415-residue chain is Serine hydroxymethyltransferase (415 aa).

(6S)-5,6,7,8-tetrahydrofolate contacts are provided by residues Leu-117 and 121-123 (GHL). Residue Lys-226 is modified to N6-(pyridoxal phosphate)lysine. (6S)-5,6,7,8-tetrahydrofolate-binding positions include Glu-241 and 349–351 (SPF).

This sequence belongs to the SHMT family. Homodimer. The cofactor is pyridoxal 5'-phosphate.

Its subcellular location is the cytoplasm. It catalyses the reaction (6R)-5,10-methylene-5,6,7,8-tetrahydrofolate + glycine + H2O = (6S)-5,6,7,8-tetrahydrofolate + L-serine. It participates in one-carbon metabolism; tetrahydrofolate interconversion. Its pathway is amino-acid biosynthesis; glycine biosynthesis; glycine from L-serine: step 1/1. In terms of biological role, catalyzes the reversible interconversion of serine and glycine with tetrahydrofolate (THF) serving as the one-carbon carrier. This reaction serves as the major source of one-carbon groups required for the biosynthesis of purines, thymidylate, methionine, and other important biomolecules. Also exhibits THF-independent aldolase activity toward beta-hydroxyamino acids, producing glycine and aldehydes, via a retro-aldol mechanism. This is Serine hydroxymethyltransferase from Trichlorobacter lovleyi (strain ATCC BAA-1151 / DSM 17278 / SZ) (Geobacter lovleyi).